We begin with the raw amino-acid sequence, 397 residues long: Pectate lyase (397 aa).

An N-terminal signal peptide occupies residues 1–25 (MDVYRIRISVFFLLVLLTFAALTTA). Asparagine 134 carries an N-linked (GlcNAc...) asparagine glycan. Ca(2+) contacts are provided by aspartate 191, aspartate 216, and aspartate 220. The N-linked (GlcNAc...) asparagine glycan is linked to asparagine 227. Residue arginine 272 is part of the active site.

The protein belongs to the polysaccharide lyase 1 family. Ca(2+) serves as cofactor.

The enzyme catalyses Eliminative cleavage of (1-&gt;4)-alpha-D-galacturonan to give oligosaccharides with 4-deoxy-alpha-D-galact-4-enuronosyl groups at their non-reducing ends.. It functions in the pathway glycan metabolism; pectin degradation; 2-dehydro-3-deoxy-D-gluconate from pectin: step 2/5. The chain is Pectate lyase from Nicotiana tabacum (Common tobacco).